Here is a 240-residue protein sequence, read N- to C-terminus: Large ribosomal subunit protein uL2 (240 aa).

Positions 200-240 are disordered; sequence HPFGGGGRQHPGKPKSISRNAPPGRKVGDIASKRTGRGGNE.

It belongs to the universal ribosomal protein uL2 family. Part of the 50S ribosomal subunit. Forms a bridge to the 30S subunit in the 70S ribosome. Interacts weakly with protein L37Ae.

Functionally, one of the primary rRNA binding proteins. Required for association of the 30S and 50S subunits to form the 70S ribosome, for tRNA binding and peptide bond formation. It has been suggested to have peptidyltransferase activity; this is somewhat controversial. Makes several contacts with the 16S rRNA in the 70S ribosome. The polypeptide is Large ribosomal subunit protein uL2 (rpl2) (Haloarcula marismortui (strain ATCC 43049 / DSM 3752 / JCM 8966 / VKM B-1809) (Halobacterium marismortui)).